Consider the following 135-residue polypeptide: Protein Wnt-7b (135 aa).

2 disulfides stabilise this stretch: cysteine 3–cysteine 17 and cysteine 5–cysteine 12. Serine 9 carries O-palmitoleoyl serine; by PORCN lipidation. The interval 41–69 (VEVVRANRLRQPTFLKIKKVRSYQKPMET) is disordered linker. Intrachain disulfides connect cysteine 81–cysteine 112, cysteine 97–cysteine 107, and cysteine 134–cysteine 135. N-linked (GlcNAc...) asparagine glycosylation is present at asparagine 98.

The protein belongs to the Wnt family. Palmitoleoylation is required for efficient binding to frizzled receptors. Depalmitoleoylation leads to Wnt signaling pathway inhibition. As to expression, in adults, in brain and lung.

The protein localises to the secreted. It is found in the extracellular space. The protein resides in the extracellular matrix. In terms of biological role, ligand for members of the frizzled family of seven transmembrane receptors that functions in the canonical Wnt/beta-catenin signaling pathway. Required for normal fusion of the chorion and the allantois during placenta development. Required for central nervous system (CNS) angiogenesis and blood-brain barrier regulation. The protein is Protein Wnt-7b (wnt7b) of Xenopus laevis (African clawed frog).